Consider the following 551-residue polypeptide: Eukaryotic translation initiation factor 3 subunit D-2 (551 aa).

Residues 108-152 are disordered; the sequence is RARGRTGRGNATLGGLGGPVAGGSTANSTKYGKGRNTRNAQNMGR. A compositionally biased stretch (gly residues) spans 119 to 128; it reads TLGGLGGPVA. Residues 290–304 form an RNA gate region; the sequence is QFDLLTVNETSLEPP. The tract at residues 530-551 is disordered; the sequence is AFDSDGDDESESSEPFGNSIDN. Positions 531-541 are enriched in acidic residues; the sequence is FDSDGDDESES.

Belongs to the eIF-3 subunit D family. In terms of assembly, component of the eukaryotic translation initiation factor 3 (eIF-3) complex. The eIF-3 complex interacts with pix.

It localises to the cytoplasm. MRNA cap-binding component of the eukaryotic translation initiation factor 3 (eIF-3) complex, which is involved in protein synthesis of a specialized repertoire of mRNAs and, together with other initiation factors, stimulates binding of mRNA and methionyl-tRNAi to the 40S ribosome. The eIF-3 complex specifically targets and initiates translation of a subset of mRNAs involved in cell proliferation. In the eIF-3 complex, eif3d specifically recognizes and binds the 7-methylguanosine cap of a subset of mRNAs. The chain is Eukaryotic translation initiation factor 3 subunit D-2 from Drosophila yakuba (Fruit fly).